We begin with the raw amino-acid sequence, 552 residues long: Hyaluronan synthase 2 (552 aa).

The Cytoplasmic portion of the chain corresponds to Met1–Arg11. Residues Ile12 to Val32 traverse the membrane as a helical segment. At Gly33–Ser45 the chain is on the extracellular side. The helical transmembrane segment at Phe46–Leu66 threads the bilayer. Topologically, residues Glu67–Leu374 are cytoplasmic. At Thr110 the chain carries Phosphothreonine. Lys190 is covalently cross-linked (Glycyl lysine isopeptide (Lys-Gly) (interchain with G-Cter in ubiquitin)). O-linked (GlcNAc) serine glycosylation occurs at Ser221. Phosphothreonine is present on Thr328. A helical transmembrane segment spans residues Trp375–Ile395. Residues Gln396–Lys402 lie on the Extracellular side of the membrane. The chain crosses the membrane as a helical span at residues Ile403–Phe423. The Cytoplasmic segment spans residues Ala424 to Gly429. The chain crosses the membrane as a helical span at residues Asn430 to Ala450. Topologically, residues Lys451–Phe475 are extracellular. Residues Ile476 to Ile496 traverse the membrane as a helical segment. At Tyr497 to Thr510 the chain is on the cytoplasmic side. The chain crosses the membrane as a helical span at residues Val511–Val531. Topologically, residues Val532–Val552 are extracellular.

The protein belongs to the NodC/HAS family. Homodimer; dimerization promotes enzymatic activity. Forms heterodimer with HAS3. Forms heterodimer with HAS1. Mg(2+) is required as a cofactor. In terms of processing, phosphorylation at Thr-328 is essential for hyaluronan synthase activity. O-GlcNAcylation at Ser-221 increases the stability of HAS2 and plasma membrane localization. Post-translationally, ubiquitination at Lys-190; this ubiquitination is essential for hyaluronan synthase activity and homo- or hetero-oligomerization. Can also be poly-ubiquitinated. Deubiquitinated by USP17L22/USP17 and USP4. USP17L22/USP17 efficiently removes 'Lys-63'- and 'Lys-48'-linked polyubiquitin chains, whereas USP4 preferentially removes monoubiquitination and, partially, both 'Lys-63'- and 'Lys-48'-linked polyubiquitin chain. In terms of tissue distribution, expressed in heart, brain, spleen, lung and skeletal muscle.

The protein resides in the cell membrane. It is found in the endoplasmic reticulum membrane. Its subcellular location is the vesicle. It localises to the golgi apparatus membrane. The protein localises to the lysosome. The enzyme catalyses [hyaluronan](n) + UDP-N-acetyl-alpha-D-glucosamine = N-acetyl-beta-D-glucosaminyl-(1-&gt;4)-[hyaluronan](n) + UDP + H(+). It carries out the reaction N-acetyl-beta-D-glucosaminyl-(1-&gt;4)-[hyaluronan](n) + UDP-alpha-D-glucuronate = [hyaluronan](n+1) + UDP + H(+). Its pathway is glycan biosynthesis; hyaluronan biosynthesis. In terms of biological role, catalyzes the addition of GlcNAc or GlcUA monosaccharides to the nascent hyaluronan polymer. Therefore, it is essential to hyaluronan synthesis a major component of most extracellular matrices that has a structural role in tissues architectures and regulates cell adhesion, migration and differentiation. This is one of the isozymes catalyzing that reaction and it is particularly responsible for the synthesis of high molecular mass hyaluronan. Required for the transition of endocardial cushion cells into mesenchymal cells, a process crucial for heart development. May also play a role in vasculogenesis. High molecular mass hyaluronan also play a role in early contact inhibition a process which stops cell growth when cells come into contact with each other or the extracellular matrix. Functionally, catalyzes the addition of GlcNAc or GlcUA monosaccharides to the nascent hyaluronan polymer. Therefore, it is essential to hyaluronan synthesis a major component of most extracellular matrices that has a structural role in tissues architectures and regulates cell adhesion, migration and differentiation. This is one of three isoenzymes responsible for cellular hyaluronan synthesis and it is particularly responsible for the synthesis of high molecular mass hyaluronan. In Mus musculus (Mouse), this protein is Hyaluronan synthase 2.